The sequence spans 265 residues: tRNA pseudouridine synthase A (265 aa).

Asp-58 acts as the Nucleophile in catalysis. Tyr-116 is a binding site for substrate.

The protein belongs to the tRNA pseudouridine synthase TruA family. In terms of assembly, homodimer.

It catalyses the reaction uridine(38/39/40) in tRNA = pseudouridine(38/39/40) in tRNA. Formation of pseudouridine at positions 38, 39 and 40 in the anticodon stem and loop of transfer RNAs. This Neisseria meningitidis serogroup B (strain ATCC BAA-335 / MC58) protein is tRNA pseudouridine synthase A.